Consider the following 310-residue polypeptide: Methionyl-tRNA formyltransferase (310 aa).

108 to 111 (SLLP) lines the (6S)-5,6,7,8-tetrahydrofolate pocket.

Belongs to the Fmt family.

The enzyme catalyses L-methionyl-tRNA(fMet) + (6R)-10-formyltetrahydrofolate = N-formyl-L-methionyl-tRNA(fMet) + (6S)-5,6,7,8-tetrahydrofolate + H(+). Its function is as follows. Attaches a formyl group to the free amino group of methionyl-tRNA(fMet). The formyl group appears to play a dual role in the initiator identity of N-formylmethionyl-tRNA by promoting its recognition by IF2 and preventing the misappropriation of this tRNA by the elongation apparatus. This is Methionyl-tRNA formyltransferase from Fusobacterium nucleatum subsp. nucleatum (strain ATCC 25586 / DSM 15643 / BCRC 10681 / CIP 101130 / JCM 8532 / KCTC 2640 / LMG 13131 / VPI 4355).